A 190-amino-acid polypeptide reads, in one-letter code: Elongation factor P (190 aa).

The protein belongs to the elongation factor P family.

Its subcellular location is the cytoplasm. Its pathway is protein biosynthesis; polypeptide chain elongation. Its function is as follows. Involved in peptide bond synthesis. Stimulates efficient translation and peptide-bond synthesis on native or reconstituted 70S ribosomes in vitro. Probably functions indirectly by altering the affinity of the ribosome for aminoacyl-tRNA, thus increasing their reactivity as acceptors for peptidyl transferase. The protein is Elongation factor P of Sulfurihydrogenibium sp. (strain YO3AOP1).